The chain runs to 253 residues: Ribosome-inactivating protein saporin-7 (253 aa).

Glu-176 is a catalytic residue.

It belongs to the ribosome-inactivating protein family. Type 1 RIP subfamily.

The catalysed reaction is Endohydrolysis of the N-glycosidic bond at one specific adenosine on the 28S rRNA.. Its function is as follows. Ribosome-inactivating protein of type 1, inhibits protein synthesis in animal cells. The chain is Ribosome-inactivating protein saporin-7 (SAP7) from Saponaria officinalis (Common soapwort).